A 220-amino-acid polypeptide reads, in one-letter code: Ribosomal RNA small subunit methyltransferase Nep1 (220 aa).

Residues glycine 178, glycine 183, and 196–201 (IYKEPL) contribute to the S-adenosyl-L-methionine site.

This sequence belongs to the class IV-like SAM-binding methyltransferase superfamily. RNA methyltransferase NEP1 family. In terms of assembly, homodimer.

The catalysed reaction is a pseudouridine in rRNA + S-adenosyl-L-methionine = an N(1)-methylpseudouridine in rRNA + S-adenosyl-L-homocysteine + H(+). Its function is as follows. Methyltransferase involved in ribosomal biogenesis. Specifically catalyzes the N1-methylation of the pseudouridine corresponding to position 914 in M.jannaschii 16S rRNA. This Thermococcus sibiricus (strain DSM 12597 / MM 739) protein is Ribosomal RNA small subunit methyltransferase Nep1.